The sequence spans 325 residues: Malate dehydrogenase (325 aa).

7–13 (GSTGRVG) serves as a coordination point for NADP(+). Substrate contacts are provided by Arg-84 and Arg-90. NADP(+)-binding positions include Asn-97 and 120–122 (VTN). Residues Asn-122 and Arg-153 each coordinate substrate. His-177 serves as the catalytic Proton acceptor.

This sequence belongs to the LDH/MDH superfamily.

The catalysed reaction is (S)-malate + NADP(+) = oxaloacetate + NADPH + H(+). It carries out the reaction (S)-malate + NAD(+) = oxaloacetate + NADH + H(+). Catalyzes the reversible oxidation of malate to oxaloacetate. Can use NAD(+) and NADP(+) with similar specific activity. In Methanothermobacter marburgensis (strain ATCC BAA-927 / DSM 2133 / JCM 14651 / NBRC 100331 / OCM 82 / Marburg) (Methanobacterium thermoautotrophicum), this protein is Malate dehydrogenase.